The primary structure comprises 216 residues: Cytidylate kinase (216 aa).

7 to 15 (GPSGTGKST) serves as a coordination point for ATP.

The protein belongs to the cytidylate kinase family. Type 1 subfamily.

The protein resides in the cytoplasm. The catalysed reaction is CMP + ATP = CDP + ADP. It catalyses the reaction dCMP + ATP = dCDP + ADP. This Chlamydia pneumoniae (Chlamydophila pneumoniae) protein is Cytidylate kinase.